The sequence spans 1240 residues: Selection and upkeep of intraepithelial T-cells protein 6 (1240 aa).

The first 24 residues, 1 to 24 (MGTIGVPLTAHCVVLFLLQMVALS), serve as a signal peptide directing secretion. Topologically, residues 25-1086 (TEQFTVNGLE…CNKRNPFWKK (1062 aa)) are extracellular. An Ig-like V-type domain is found at 26 to 141 (EQFTVNGLES…EEHIIEVKVT (116 aa)). Cysteines 49 and 123 form a disulfide. An Ig-like C1-type domain is found at 142-231 (ATSSDIQILM…FVTHQEESIS (90 aa)). Asn-155, Asn-200, and Asn-314 each carry an N-linked (GlcNAc...) asparagine glycan. A disulfide bridge links Cys-163 with Cys-217. The chain crosses the membrane as a helical span at residues 1087–1107 (HALDLGISVFAIIVVTLIRHL). The Cytoplasmic portion of the chain corresponds to 1108–1125 (NQREADQHFELDTLWSKD). A helical membrane pass occupies residues 1126 to 1146 (TSVILCVLIMFNNRLKALIYF). Over 1147-1167 (RLYGYSPPGKTYKYIVNYILR) the chain is Extracellular. The helical transmembrane segment at 1168–1188 (FSQPLFFIVYSAIILVMHLQI) threads the bilayer. The Cytoplasmic segment spans residues 1189–1205 (QNTDSLFSLYNSWMVEM). A helical transmembrane segment spans residues 1206-1226 (IMVLGLLLAIFNVKNIATALL). Topologically, residues 1227 to 1240 (HLGRTTLRLFRIKD) are extracellular.

This sequence belongs to the SKINT family. As to expression, expressed in skin.

It localises to the membrane. Its function is as follows. May act by engaging a cell surface molecule on immature T-cells in the embryonic thymus. The polypeptide is Selection and upkeep of intraepithelial T-cells protein 6 (Skint6) (Mus musculus (Mouse)).